Consider the following 91-residue polypeptide: Probable Thioredoxin (91 aa).

The region spanning 1-91 is the Glutaredoxin domain; that stretch reads MVMMKLFTSP…LKGGEEYGAS (91 aa). Cysteines 12 and 15 form a disulfide.

It belongs to the glutaredoxin family.

The protein localises to the cytoplasm. In terms of biological role, acts to maintain redox homeostasis; functions as a protein disulfide reductase. This is Probable Thioredoxin from Archaeoglobus fulgidus (strain ATCC 49558 / DSM 4304 / JCM 9628 / NBRC 100126 / VC-16).